The primary structure comprises 260 residues: 3'-5' ssDNA/RNA exonuclease TatD (260 aa).

A divalent metal cation-binding residues include Glu92, His128, and His153.

It belongs to the metallo-dependent hydrolases superfamily. TatD-type hydrolase family. TatD subfamily. Monomer. It depends on Mg(2+) as a cofactor.

It localises to the cytoplasm. Functionally, 3'-5' exonuclease that prefers single-stranded DNA and RNA. May play a role in the H(2)O(2)-induced DNA damage repair. The sequence is that of 3'-5' ssDNA/RNA exonuclease TatD from Edwardsiella piscicida.